A 422-amino-acid chain; its full sequence is UDP-N-acetylglucosamine 1-carboxyvinyltransferase (422 aa).

Residue Lys-24–Asn-25 participates in phosphoenolpyruvate binding. Arg-93 is a binding site for UDP-N-acetyl-alpha-D-glucosamine. Residue Cys-117 is the Proton donor of the active site. Cys-117 bears the 2-(S-cysteinyl)pyruvic acid O-phosphothioketal mark. UDP-N-acetyl-alpha-D-glucosamine contacts are provided by residues Arg-122–Leu-126, Lys-162–Val-165, Asp-307, and Ile-329.

Belongs to the EPSP synthase family. MurA subfamily.

It is found in the cytoplasm. The enzyme catalyses phosphoenolpyruvate + UDP-N-acetyl-alpha-D-glucosamine = UDP-N-acetyl-3-O-(1-carboxyvinyl)-alpha-D-glucosamine + phosphate. Its pathway is cell wall biogenesis; peptidoglycan biosynthesis. In terms of biological role, cell wall formation. Adds enolpyruvyl to UDP-N-acetylglucosamine. In Vibrio atlanticus (strain LGP32) (Vibrio splendidus (strain Mel32)), this protein is UDP-N-acetylglucosamine 1-carboxyvinyltransferase.